The following is a 364-amino-acid chain: Pre-small/secreted glycoprotein (364 aa).

A signal peptide spans 1–32; that stretch reads MGVTGILQLPRDRFKRTSFFLWVIILFQRTFS. Asn40 carries N-linked (GlcNAc...) asparagine; by host glycosylation. 2 disulfide bridges follow: Cys108/Cys135 and Cys121/Cys147. N-linked (GlcNAc...) asparagine; by host glycans are attached at residues Asn204, Asn228, Asn238, Asn257, and Asn268.

Belongs to the filoviruses glycoprotein family. In terms of assembly, homodimer; disulfide-linked. The homodimers are linked by two disulfide bonds in a parallel orientation. As to quaternary structure, monomer. In terms of processing, this precursor is processed into mature sGP and delta-peptide by host furin or furin-like proteases. The cleavage site corresponds to the furin optimal cleavage sequence [KR]-X-[KR]-R. N-glycosylated. Post-translationally, O-glycosylated.

It is found in the secreted. Seems to possess an anti-inflammatory activity as it can reverse the barrier-decreasing effects of TNF alpha. Might therefore contribute to the lack of inflammatory reaction seen during infection in spite the of extensive necrosis and massive virus production. Does not seem to be involved in activation of primary macrophages. Does not seem to interact specifically with neutrophils. Functionally, viroporin that permeabilizes mammalian cell plasma membranes. It acts by altering permeation of ionic compounds and small molecules. This activity may lead to viral enterotoxic activity. The protein is Pre-small/secreted glycoprotein (GP) of Epomops franqueti (Franquet's epauletted fruit bat).